Here is a 282-residue protein sequence, read N- to C-terminus: Ribosomal RNA small subunit methyltransferase I (282 aa).

This sequence belongs to the methyltransferase superfamily. RsmI family.

The protein localises to the cytoplasm. The enzyme catalyses cytidine(1402) in 16S rRNA + S-adenosyl-L-methionine = 2'-O-methylcytidine(1402) in 16S rRNA + S-adenosyl-L-homocysteine + H(+). Its function is as follows. Catalyzes the 2'-O-methylation of the ribose of cytidine 1402 (C1402) in 16S rRNA. In Buchnera aphidicola subsp. Acyrthosiphon pisum (strain APS) (Acyrthosiphon pisum symbiotic bacterium), this protein is Ribosomal RNA small subunit methyltransferase I.